The chain runs to 719 residues: Delta-1-pyrroline-5-carboxylate synthase (719 aa).

A glutamate 5-kinase region spans residues 1–293; sequence MDATRAFVKD…WVQVKETGVR (293 aa). 3 residues coordinate substrate: S57, D154, and N173. ATP-binding positions include 193–194 and 233–239; these read SD and RGGMTAK. The tract at residues 294 to 719 is gamma-glutamyl phosphate reductase; it reads DMAVAARESS…KDLPLVAQNS (426 aa).

In the N-terminal section; belongs to the glutamate 5-kinase family. It in the C-terminal section; belongs to the gamma-glutamyl phosphate reductase family. As to expression, expressed at high levels in leaves and is inducible in roots subjected to salt stress.

The enzyme catalyses L-glutamate + ATP = L-glutamyl 5-phosphate + ADP. The catalysed reaction is L-glutamate 5-semialdehyde + phosphate + NADP(+) = L-glutamyl 5-phosphate + NADPH + H(+). It participates in amino-acid biosynthesis; L-proline biosynthesis; L-glutamate 5-semialdehyde from L-glutamate: step 1/2. Its pathway is amino-acid biosynthesis; L-proline biosynthesis; L-glutamate 5-semialdehyde from L-glutamate: step 2/2. Its activity is regulated as follows. Feedback regulated by proline. P5CS plays a key role in proline biosynthesis, leading to osmoregulation in plants. The chain is Delta-1-pyrroline-5-carboxylate synthase (P5CS) from Mesembryanthemum crystallinum (Common ice plant).